Reading from the N-terminus, the 574-residue chain is Isocitrate dehydrogenase kinase/phosphatase (574 aa).

ATP is bound by residues 315-321 (APGIRGM) and Lys336. The active site involves Asp371.

This sequence belongs to the AceK family.

It localises to the cytoplasm. The enzyme catalyses L-seryl-[isocitrate dehydrogenase] + ATP = O-phospho-L-seryl-[isocitrate dehydrogenase] + ADP + H(+). Functionally, bifunctional enzyme which can phosphorylate or dephosphorylate isocitrate dehydrogenase (IDH) on a specific serine residue. This is a regulatory mechanism which enables bacteria to bypass the Krebs cycle via the glyoxylate shunt in response to the source of carbon. When bacteria are grown on glucose, IDH is fully active and unphosphorylated, but when grown on acetate or ethanol, the activity of IDH declines drastically concomitant with its phosphorylation. This chain is Isocitrate dehydrogenase kinase/phosphatase, found in Escherichia coli (strain SMS-3-5 / SECEC).